A 179-amino-acid polypeptide reads, in one-letter code: Large ribosomal subunit protein uL5 (179 aa).

It belongs to the universal ribosomal protein uL5 family. Part of the 50S ribosomal subunit; part of the 5S rRNA/L5/L18/L25 subcomplex. Contacts the 5S rRNA and the P site tRNA. Forms a bridge to the 30S subunit in the 70S ribosome.

This is one of the proteins that bind and probably mediate the attachment of the 5S RNA into the large ribosomal subunit, where it forms part of the central protuberance. In the 70S ribosome it contacts protein S13 of the 30S subunit (bridge B1b), connecting the 2 subunits; this bridge is implicated in subunit movement. Contacts the P site tRNA; the 5S rRNA and some of its associated proteins might help stabilize positioning of ribosome-bound tRNAs. This Clostridium beijerinckii (strain ATCC 51743 / NCIMB 8052) (Clostridium acetobutylicum) protein is Large ribosomal subunit protein uL5.